The sequence spans 572 residues: Mitochondrial distribution and morphology protein 34 (572 aa).

One can recognise an SMP-LTD domain in the interval 1-195 (MAFNFNWSPL…LPAIIHRLSL (195 aa)). Disordered regions lie at residues 208 to 236 (LQTQ…VDAL), 296 to 405 (PSDQ…CSAP), 455 to 518 (RDTA…PFIN), and 551 to 572 (NACG…AYGH). Residues 296 to 347 (PSDQTDASGGVTSPFSPVLSRTQSQVGSMSSFPDSASMVSNQSRSSTPSHTF) are compositionally biased toward polar residues. Basic residues predominate over residues 358–370 (RHSKAHARKRKKR). Positions 371-381 (VVDLRRPKTTD) are enriched in basic and acidic residues. Polar residues-rich tracts occupy residues 387-401 (SDES…TPSI) and 498-511 (ATGS…QLPS).

The protein belongs to the MDM34 family. In terms of assembly, component of the ER-mitochondria encounter structure (ERMES) or MDM complex, composed of mmm1, mdm10, mdm12 and mdm34.

It is found in the mitochondrion outer membrane. In terms of biological role, component of the ERMES/MDM complex, which serves as a molecular tether to connect the endoplasmic reticulum (ER) and mitochondria. Components of this complex are involved in the control of mitochondrial shape and protein biogenesis, and function in nonvesicular lipid trafficking between the ER and mitochondria. Mdm34 is required for the interaction of the ER-resident membrane protein mmm1 and the outer mitochondrial membrane-resident beta-barrel protein mdm10. This is Mitochondrial distribution and morphology protein 34 from Neosartorya fischeri (strain ATCC 1020 / DSM 3700 / CBS 544.65 / FGSC A1164 / JCM 1740 / NRRL 181 / WB 181) (Aspergillus fischerianus).